A 144-amino-acid polypeptide reads, in one-letter code: Large ribosomal subunit protein uL15 (144 aa).

Residues 1–54 (MRLNTLSPAAGSKHAPKRVGRGMGSGLGKTAGRGHKGQKSRSGGGVRPGFEGGQ) form a disordered region. Composition is skewed to gly residues over residues 21–31 (RGMGSGLGKTA) and 42–52 (SGGGVRPGFEG).

The protein belongs to the universal ribosomal protein uL15 family. As to quaternary structure, part of the 50S ribosomal subunit.

In terms of biological role, binds to the 23S rRNA. The sequence is that of Large ribosomal subunit protein uL15 from Shewanella baltica (strain OS223).